We begin with the raw amino-acid sequence, 324 residues long: D-alanine--D-alanine ligase (324 aa).

The ATP-grasp domain occupies asparagine 121–glutamate 321. Methionine 149–threonine 204 is a binding site for ATP. The Mg(2+) site is built by aspartate 275, glutamate 288, and asparagine 290.

Belongs to the D-alanine--D-alanine ligase family. Mg(2+) is required as a cofactor. It depends on Mn(2+) as a cofactor.

It localises to the cytoplasm. The catalysed reaction is 2 D-alanine + ATP = D-alanyl-D-alanine + ADP + phosphate + H(+). It participates in cell wall biogenesis; peptidoglycan biosynthesis. Its function is as follows. Cell wall formation. The protein is D-alanine--D-alanine ligase of Bacteroides thetaiotaomicron (strain ATCC 29148 / DSM 2079 / JCM 5827 / CCUG 10774 / NCTC 10582 / VPI-5482 / E50).